Reading from the N-terminus, the 1014-residue chain is Probable sucrose-phosphate synthase 5 (1014 aa).

2 stretches are compositionally biased toward basic and acidic residues: residues 29–41 and 49–58; these read RRLEQELGSREAA and EGEKDGKPDT. Disordered stretches follow at residues 29–108 and 648–677; these read RRLE…SDEE and QLLRVPPSPSSSSAAAAAAGGGGAAASSEP.

The protein belongs to the glycosyltransferase 1 family. Homodimer or homotetramer. As to expression, expressed in germinating seeds.

The catalysed reaction is beta-D-fructose 6-phosphate + UDP-alpha-D-glucose = sucrose 6(F)-phosphate + UDP + H(+). It functions in the pathway glycan biosynthesis; sucrose biosynthesis; sucrose from D-fructose 6-phosphate and UDP-alpha-D-glucose: step 1/2. Its activity is regulated as follows. Activity is regulated by phosphorylation and moderated by concentration of metabolites and light. Plays a role in photosynthetic sucrose synthesis by catalyzing the rate-limiting step of sucrose biosynthesis from UDP-glucose and fructose- 6-phosphate. Involved in the regulation of carbon partitioning in the leaves of plants. May regulate the synthesis of sucrose and therefore play a major role as a limiting factor in the export of photoassimilates out of the leaf. Plays a role for sucrose availability that is essential for plant growth and fiber elongation. This Oryza sativa subsp. japonica (Rice) protein is Probable sucrose-phosphate synthase 5 (SPS5).